A 227-amino-acid chain; its full sequence is 2-C-methyl-D-erythritol 4-phosphate cytidylyltransferase (227 aa).

The protein belongs to the IspD/TarI cytidylyltransferase family. IspD subfamily.

The catalysed reaction is 2-C-methyl-D-erythritol 4-phosphate + CTP + H(+) = 4-CDP-2-C-methyl-D-erythritol + diphosphate. Its pathway is isoprenoid biosynthesis; isopentenyl diphosphate biosynthesis via DXP pathway; isopentenyl diphosphate from 1-deoxy-D-xylulose 5-phosphate: step 2/6. Functionally, catalyzes the formation of 4-diphosphocytidyl-2-C-methyl-D-erythritol from CTP and 2-C-methyl-D-erythritol 4-phosphate (MEP). The polypeptide is 2-C-methyl-D-erythritol 4-phosphate cytidylyltransferase (Nostoc punctiforme (strain ATCC 29133 / PCC 73102)).